We begin with the raw amino-acid sequence, 163 residues long: Phosphopantetheine adenylyltransferase (163 aa).

Thr-9 is a substrate binding site. ATP contacts are provided by residues 9 to 10 (TF) and His-17. 3 residues coordinate substrate: Lys-41, Thr-73, and Arg-87. ATP is bound by residues 88–90 (GLR), Glu-98, and 123–129 (FSFISSS).

It belongs to the bacterial CoaD family. Homohexamer. Mg(2+) serves as cofactor.

It is found in the cytoplasm. It carries out the reaction (R)-4'-phosphopantetheine + ATP + H(+) = 3'-dephospho-CoA + diphosphate. It functions in the pathway cofactor biosynthesis; coenzyme A biosynthesis; CoA from (R)-pantothenate: step 4/5. In terms of biological role, reversibly transfers an adenylyl group from ATP to 4'-phosphopantetheine, yielding dephospho-CoA (dPCoA) and pyrophosphate. This is Phosphopantetheine adenylyltransferase from Desulfitobacterium hafniense (strain DSM 10664 / DCB-2).